The following is a 302-amino-acid chain: TATA-box-binding protein (302 aa).

Disordered regions lie at residues 1–22 and 50–81; these read MEQNNSLPPFAQGLASPQGAMT and SLLEEQQRQQQQQQAASQQQGGMVGGSGQTPQ. Residues 50-70 are compositionally biased toward low complexity; that stretch reads SLLEEQQRQQQQQQAASQQQG. A run of 2 repeats spans residues 128-204 and 218-295.

It belongs to the TBP family. As to expression, enriched in testis but hardly detectable in the ovary (at protein level).

Its subcellular location is the nucleus. General transcription factor that functions at the core of the DNA-binding multiprotein factor TFIID. Binding of TFIID to the TATA box is the initial transcriptional step of the pre-initiation complex (PIC), playing a role in the activation of eukaryotic genes transcribed by RNA polymerase II. Members of the TBP family are differentially required for transcription and development during early embryogenesis. Regulates mRNA levels in the early embryo by both transcriptional and post-transcriptional mechanisms. Required for transcription of a subset of genes at the mid-blastula transition (MBT). Negatively regulates the expression of other embryonic genes, including autoregulation of the tbp promoter itself. Also functions within a transcription-dependent mechanism to direct the temporally-regulated degradation of a subset of maternal mRNAs after the MBT. This is part of a general mechanism to regulate the maternal to zygotic transition and is required for normal embryonic development. Binds to promoters of a subset of genes. Required for gastrulation. This is TATA-box-binding protein from Danio rerio (Zebrafish).